The chain runs to 277 residues: Small ribosomal subunit protein uS2 (277 aa).

The segment covering 228–241 has biased composition (basic and acidic residues); the sequence is YEERLQAETDKDAE. The segment at 228-277 is disordered; sequence YEERLQAETDKDAESSTVQQEENPEADIPESIETKESVSAAADSDLDENE.

The protein belongs to the universal ribosomal protein uS2 family.

The polypeptide is Small ribosomal subunit protein uS2 (Syntrophus aciditrophicus (strain SB)).